The sequence spans 348 residues: NADH-cytochrome b5 reductase 2 (348 aa).

A helical membrane pass occupies residues 41 to 61 (TLLYGAAAAAVAGAGYYFLGG). The FAD-binding FR-type domain maps to 97–202 (QGWVSLKLEE…KGPLPKYPWT (106 aa)). 205–240 (KHGHIALVAGGTGITPMFQLCRAIFNNPDDQTKVTL) is a binding site for FAD.

This sequence belongs to the flavoprotein pyridine nucleotide cytochrome reductase family. FAD is required as a cofactor.

Its subcellular location is the mitochondrion outer membrane. The catalysed reaction is 2 Fe(III)-[cytochrome b5] + NADH = 2 Fe(II)-[cytochrome b5] + NAD(+) + H(+). Its function is as follows. May mediate the reduction of outer membrane cytochrome b5. The sequence is that of NADH-cytochrome b5 reductase 2 (MCR1) from Chaetomium globosum (strain ATCC 6205 / CBS 148.51 / DSM 1962 / NBRC 6347 / NRRL 1970) (Soil fungus).